Here is a 160-residue protein sequence, read N- to C-terminus: Ribonuclease P protein component 2 (160 aa).

This sequence belongs to the eukaryotic/archaeal RNase P protein component 2 family. In terms of assembly, consists of a catalytic RNA component and at least 4-5 protein subunits.

Its subcellular location is the cytoplasm. The catalysed reaction is Endonucleolytic cleavage of RNA, removing 5'-extranucleotides from tRNA precursor.. In terms of biological role, part of ribonuclease P, a protein complex that generates mature tRNA molecules by cleaving their 5'-ends. This is Ribonuclease P protein component 2 from Methanoculleus marisnigri (strain ATCC 35101 / DSM 1498 / JR1).